The sequence spans 120 residues: Ribosome-binding factor A (120 aa).

It belongs to the RbfA family. As to quaternary structure, monomer. Binds 30S ribosomal subunits, but not 50S ribosomal subunits or 70S ribosomes.

It localises to the cytoplasm. One of several proteins that assist in the late maturation steps of the functional core of the 30S ribosomal subunit. Associates with free 30S ribosomal subunits (but not with 30S subunits that are part of 70S ribosomes or polysomes). Required for efficient processing of 16S rRNA. May interact with the 5'-terminal helix region of 16S rRNA. The polypeptide is Ribosome-binding factor A (Chlorobaculum tepidum (strain ATCC 49652 / DSM 12025 / NBRC 103806 / TLS) (Chlorobium tepidum)).